A 127-amino-acid chain; its full sequence is Anti-adapter protein IraD (127 aa).

This sequence belongs to the GpW/Gp25 family. IraD subfamily. Interacts with RssB.

It localises to the cytoplasm. Functionally, inhibits RpoS proteolysis by regulating RssB activity, thereby increasing the stability of the sigma stress factor RpoS during oxidative stress. Its effect on RpoS stability is due to its interaction with RssB, which probably blocks the interaction of RssB with RpoS, and the consequent delivery of the RssB-RpoS complex to the ClpXP protein degradation pathway. The sequence is that of Anti-adapter protein IraD from Escherichia coli (strain SMS-3-5 / SECEC).